The primary structure comprises 407 residues: 41 kDa spicule matrix protein (407 aa).

The signal sequence occupies residues 1-17; it reads MKGVLFIVASLVAFATG. The C-type lectin domain occupies 29–160; the sequence is SGQSCYRYFN…PGRAPVMKRQ (132 aa). Disordered regions lie at residues 143 to 176 and 204 to 407; these read PQNP…IPQG and IGQQ…DALA. Positions 223–369 are enriched in gly residues; sequence NQPGMGGRQP…MGGRQPGMGG (147 aa). Residues 370–398 are compositionally biased toward low complexity; sequence QQPNNPNNPNNPNNPNNPNNPNPRFNRPR.

This sequence belongs to the SM50 family. Expressed specifically in the micromere/primary mesenchyme cells (PMC) lineage.

The protein localises to the secreted. Functionally, major matrix protein of the sea urchin embryo spicule which directs crystal growth in certain orientations and inhibit growth in others. In Hemicentrotus pulcherrimus (Sea urchin), this protein is 41 kDa spicule matrix protein.